A 698-amino-acid polypeptide reads, in one-letter code: Ubiquitin-like modifier-activating enzyme ATG7 (698 aa).

The FAP motif signature appears at 11–13; that stretch reads FAP. Lys-41 is covalently cross-linked (Glycyl lysine isopeptide (Lys-Gly) (interchain with G-Cter in ubiquitin)). The Glycyl thioester intermediate role is filled by Cys-567. Ser-693 is modified (phosphoserine).

It belongs to the ATG7 family. In terms of assembly, homodimer. Interacts with ATG3; this interaction is essential for the transfer of ATG8-like proteins's thioester from ATG7 to ATG3 and plays a role in the conjugation of ATG12 to ATG5. Interacts with ATG12. Interacts with ATG10. Forms intermediate conjugates with GABARAPL1. Forms intermediate conjugates with ATG8-like proteins such as GABARAP, GABARAPL2 or MAP1LC3A. Interacts with EP300 acetyltransferase. Interacts with FOXO1. In terms of processing, acetylated by EP300. Post-translationally, polyubiquitinated on Lys-41 via 'Lys-63'-linked ubiquitin by TRIM32; this modification positiely regulates ATG8 and ATG12 activating enzyme activity leading to initiation of autophagy under metabolic stress. As to expression, widely expressed, especially in kidney, liver, lymph nodes and bone marrow.

It localises to the cytoplasm. The protein resides in the preautophagosomal structure. Its function is as follows. E1-like activating enzyme involved in the 2 ubiquitin-like systems required for cytoplasm to vacuole transport (Cvt) and autophagy. Activates ATG12 for its conjugation with ATG5 as well as the ATG8 family proteins for their conjugation with phosphatidylethanolamine. Both systems are needed for the ATG8 association to Cvt vesicles and autophagosomes membranes. Facilitates LC3-I lipidation with phosphatidylethanolamine to form LC3-II which is found on autophagosomal membranes. Required for autophagic death induced by caspase-8 inhibition. Required for mitophagy which contributes to regulate mitochondrial quantity and quality by eliminating the mitochondria to a basal level to fulfill cellular energy requirements and preventing excess ROS production. Modulates p53/TP53 activity to regulate cell cycle and survival during metabolic stress. Also plays a key role in the maintenance of axonal homeostasis, the prevention of axonal degeneration, the maintenance of hematopoietic stem cells, the formation of Paneth cell granules, as well as in adipose differentiation. Plays a role in regulating the liver clock and glucose metabolism by mediating the autophagic degradation of CRY1 (clock repressor) in a time-dependent manner. This chain is Ubiquitin-like modifier-activating enzyme ATG7, found in Mus musculus (Mouse).